Reading from the N-terminus, the 298-residue chain is Chitin deacetylase (298 aa).

An N-terminal signal peptide occupies residues M1–A16. The NodB homology domain maps to N39 to V222. The active-site Proton acceptor is the D46. D46 provides a ligand contact to acetate. Residues D47, H99, and H103 each contribute to the Co(2+) site. Acetate is bound at residue Y140. The Proton donor role is filled by H196. The Chitin-binding type-1 domain maps to D256–T298. 4 disulfide bridges follow: C259-C273, C267-C279, C272-C286, and C290-C297.

Belongs to the polysaccharide deacetylase family. Co(2+) is required as a cofactor.

Its subcellular location is the secreted. It carries out the reaction [(1-&gt;4)-N-acetyl-beta-D-glucosaminyl](n) + n H2O = chitosan + n acetate. Inhibited by Fe(2+) and to a lesser extent by Mn(2+). Hydrolyzes the N-acetamido groups of N-acetyl-D-glucosamine polymers in chitin to form chitosan and acetate. May play a role in evasion of the host immune response; plant chitinases liberate chitin molecules from the fungal cell wall which act as elicitors of the plant immune response, deacetylation of the liberated chitin neutralizes elicitor activity. This chain is Chitin deacetylase, found in Pestalotiopsis sp.